The following is a 96-amino-acid chain: Small ribosomal subunit protein bS6 (96 aa).

The protein belongs to the bacterial ribosomal protein bS6 family.

Its function is as follows. Binds together with bS18 to 16S ribosomal RNA. The polypeptide is Small ribosomal subunit protein bS6 (Salinispora arenicola (strain CNS-205)).